We begin with the raw amino-acid sequence, 1036 residues long: Mitogen-activated protein kinase kinase kinase 21 (1036 aa).

A disordered region spans residues 1-36 (MALRGAAGATDTPVSSAGGAPGGSASSSSTSSGGSA). Low complexity predominate over residues 15-36 (SSAGGAPGGSASSSSTSSGGSA). Positions 38 to 102 (AGAGLWAALY…PANYVAPCRP (65 aa)) constitute an SH3 domain. The region spanning 124-401 (LELKELIGAG…ALILEQLTAI (278 aa)) is the Protein kinase domain. Residues 130–138 (IGAGGFGQV) and Lys-151 each bind ATP. Asp-263 functions as the Proton acceptor in the catalytic mechanism. A Phosphothreonine; by autocatalysis modification is found at Thr-299. Ser-303 carries the phosphoserine; by autocatalysis and MAP4K1 modification. 2 leucine-zipper regions span residues 425–446 (IQQM…EEEL) and 460–481 (LKRR…ELNI). A disordered region spans residues 517–551 (SDFQHKITVQASPNLDKRRSLNSSSSSPPSSPTMM). A phosphoserine mark is found at Ser-528, Ser-543, and Ser-547. At Thr-592 the chain carries Phosphothreonine. Position 614 is a phosphoserine (Ser-614). Positions 748-763 (AEEPLPKEEKKKREGI) are enriched in basic and acidic residues. 2 disordered regions span residues 748 to 791 (AEEP…SSPP) and 923 to 954 (PHSH…RSRS).

It belongs to the protein kinase superfamily. STE Ser/Thr protein kinase family. MAP kinase kinase kinase subfamily. In terms of assembly, homodimer. Interacts with TLR4. Mg(2+) is required as a cofactor. Autophosphorylation on serine and threonine residues within the activation loop plays a role in enzyme activation.

The enzyme catalyses L-seryl-[protein] + ATP = O-phospho-L-seryl-[protein] + ADP + H(+). It catalyses the reaction L-threonyl-[protein] + ATP = O-phospho-L-threonyl-[protein] + ADP + H(+). Its activity is regulated as follows. Homodimerization via the leucine zipper domains is required for autophosphorylation and subsequent activation. Negative regulator of TLR4 signaling. Does not activate JNK1/MAPK8 pathway, p38/MAPK14, nor ERK2/MAPK1 pathways. This chain is Mitogen-activated protein kinase kinase kinase 21, found in Homo sapiens (Human).